The sequence spans 280 residues: Borealin (280 aa).

Residues Lys-140–Arg-153 are compositionally biased toward basic residues. Residues Lys-140–Tyr-187 are disordered.

Belongs to the borealin family. In terms of assembly, component of the CPC at least composed of survivin/birc5, incenp, cdca8/borealin and/or cdca9/dasra-A, and aurkb/aurora-B. Interacts with incenp (via N-terminus).

It localises to the nucleus. The protein resides in the chromosome. Its subcellular location is the centromere. It is found in the cytoplasm. The protein localises to the cytoskeleton. It localises to the spindle. In terms of biological role, component of the chromosomal passenger complex (CPC), a complex that acts as a key regulator of mitosis. The CPC complex has essential functions at the centromere in ensuring correct chromosome alignment and segregation and is required for chromatin-induced microtubule stabilization and spindle assembly. Contributes to CPC function by facilitating loading of the CPC onto chromosomes. The polypeptide is Borealin (cdca8) (Xenopus laevis (African clawed frog)).